The primary structure comprises 200 residues: Inner membrane-spanning protein YciB (200 aa).

Helical transmembrane passes span 7-27 (HPLF…VVNA), 32-52 (FAAT…SYVV), 56-76 (VPLM…LTLV), 93-113 (LFAA…AIMF), 126-146 (ILTF…EIIW), and 153-173 (FWVG…AIAQ).

This sequence belongs to the YciB family.

The protein resides in the cell inner membrane. Functionally, plays a role in cell envelope biogenesis, maintenance of cell envelope integrity and membrane homeostasis. The polypeptide is Inner membrane-spanning protein YciB (Bradyrhizobium sp. (strain BTAi1 / ATCC BAA-1182)).